A 319-amino-acid polypeptide reads, in one-letter code: Ornithine carbamoyltransferase (319 aa).

Carbamoyl phosphate is bound by residues 55–58 (STRT), Gln-82, Arg-106, and 133–136 (HPCQ). L-ornithine is bound by residues Asn-171, Asp-234, and 238-239 (SM). Carbamoyl phosphate contacts are provided by residues 274-275 (CL) and Arg-302.

Belongs to the aspartate/ornithine carbamoyltransferase superfamily. OTCase family.

The protein localises to the cytoplasm. It catalyses the reaction carbamoyl phosphate + L-ornithine = L-citrulline + phosphate + H(+). Its pathway is amino-acid biosynthesis; L-arginine biosynthesis; L-arginine from L-ornithine and carbamoyl phosphate: step 1/3. Its function is as follows. Reversibly catalyzes the transfer of the carbamoyl group from carbamoyl phosphate (CP) to the N(epsilon) atom of ornithine (ORN) to produce L-citrulline. The protein is Ornithine carbamoyltransferase of Corynebacterium diphtheriae (strain ATCC 700971 / NCTC 13129 / Biotype gravis).